A 769-amino-acid chain; its full sequence is Post-GPI attachment to proteins factor 6 (769 aa).

An N-terminal signal peptide occupies residues 1-33 (MGRVGAGGTAREAATGSLLLLLLLLARPPPAAA). Residues 34–543 (SNSKESEAGL…STAQTVAQQR (510 aa)) lie on the Extracellular side of the membrane. 2 N-linked (GlcNAc...) asparagine glycosylation sites follow: Asn-138 and Asn-411. The EGF-like domain occupies 495–531 (PCLNDCGPYGQCLLLRRYGYVYAGCSCKAGWRGWSCT). Cystine bridges form between Cys-496–Cys-506, Cys-500–Cys-519, and Cys-521–Cys-530. The helical transmembrane segment at 544–564 (AAALLLTLSNLMFLAPIAISL) threads the bilayer. The Cytoplasmic portion of the chain corresponds to 565-567 (HRS). A helical transmembrane segment spans residues 568 to 588 (FLVEASVYFYTMFFSTFYHAC). The Extracellular portion of the chain corresponds to 589-603 (DQPGEAVLCILSYDT). The chain crosses the membrane as a helical span at residues 604 to 624 (LQYCDFLGSGASTWVTILCMA). At 625-627 (RLK) the chain is on the cytoplasmic side. A helical transmembrane segment spans residues 628 to 648 (TILKQVLLVLGTLVIAMSLQM). At 649–651 (DRR) the chain is on the extracellular side. The chain crosses the membrane as a helical span at residues 652–672 (GIWNLMGPCVFAFVIMASMWI). Residues 673–688 (YRCGHRGQCYPTSWQR) are Cytoplasmic-facing. Residues 689-709 (WVFYLLPGISMASVGIAMYTS) traverse the membrane as a helical segment. The Extracellular segment spans residues 710-715 (MMTSDN). Residues 716 to 736 (YYYTHSIWHILLAGSAAFLLP) traverse the membrane as a helical segment. At 737-769 (PREEKAGSWACLQKFPCHYQICRNDRDELYTVT) the chain is on the cytoplasmic side.

It belongs to the TMEM8 family. In terms of processing, glycosylated.

The protein localises to the cell membrane. Its subcellular location is the lysosome membrane. It carries out the reaction a 1,2-diacyl-sn-glycero-3-phosphocholine + H2O = a 1-acyl-sn-glycero-3-phosphocholine + a fatty acid + H(+). Functionally, involved in the lipid remodeling steps of GPI-anchor maturation. Lipid remodeling steps consist in the generation of 2 saturated fatty chains at the sn-2 position of GPI-anchor proteins (GPI-AP). Has phospholipase A2 activity that removes an acyl-chain at the sn-2 position of GPI-anchors during the remodeling of GPI. Required for the shedding of the GPI-AP CRIPTO, but not CFC1, at the cell surface. Shedding of CRIPTO modulates Nodal signaling by allowing soluble CRIPTO to act as a Nodal coreceptor on other cells. Also indirectly involved in the translocation of RAC1 from the cytosol to the plasma membrane by maintaining the steady state amount of CAV1-enriched plasma membrane subdomains, stabilizing RAC1 at the plasma membrane. This Mus musculus (Mouse) protein is Post-GPI attachment to proteins factor 6.